The sequence spans 279 residues: Tryptophan synthase alpha chain (279 aa).

Catalysis depends on proton acceptor residues E50 and D61.

It belongs to the TrpA family. As to quaternary structure, tetramer of two alpha and two beta chains.

The enzyme catalyses (1S,2R)-1-C-(indol-3-yl)glycerol 3-phosphate + L-serine = D-glyceraldehyde 3-phosphate + L-tryptophan + H2O. It participates in amino-acid biosynthesis; L-tryptophan biosynthesis; L-tryptophan from chorismate: step 5/5. Functionally, the alpha subunit is responsible for the aldol cleavage of indoleglycerol phosphate to indole and glyceraldehyde 3-phosphate. The protein is Tryptophan synthase alpha chain of Sinorhizobium fredii (strain NBRC 101917 / NGR234).